The chain runs to 364 residues: DNA polymerase IV (364 aa).

One can recognise a UmuC domain in the interval 14 to 198 (IIHIDMDAFF…LPIEKFHGVG (185 aa)). Asp-18 and Asp-116 together coordinate Mg(2+). The active site involves Glu-117.

This sequence belongs to the DNA polymerase type-Y family. Monomer. Requires Mg(2+) as cofactor.

The protein resides in the cytoplasm. It catalyses the reaction DNA(n) + a 2'-deoxyribonucleoside 5'-triphosphate = DNA(n+1) + diphosphate. Its function is as follows. Poorly processive, error-prone DNA polymerase involved in untargeted mutagenesis. Copies undamaged DNA at stalled replication forks, which arise in vivo from mismatched or misaligned primer ends. These misaligned primers can be extended by PolIV. Exhibits no 3'-5' exonuclease (proofreading) activity. May be involved in translesional synthesis, in conjunction with the beta clamp from PolIII. The chain is DNA polymerase IV from Streptococcus pyogenes serotype M1.